A 91-amino-acid polypeptide reads, in one-letter code: Acylphosphatase (91 aa).

The 89-residue stretch at 3–91 (KLRMNVQGRV…EETEQFKVIQ (89 aa)) folds into the Acylphosphatase-like domain. Active-site residues include Arg-18 and Asn-36.

It belongs to the acylphosphatase family.

It carries out the reaction an acyl phosphate + H2O = a carboxylate + phosphate + H(+). The chain is Acylphosphatase (acyP) from Enterococcus faecalis (strain ATCC 700802 / V583).